A 1099-amino-acid chain; its full sequence is Exonuclease/helicase subunit RexB (1099 aa).

Residues Cys766, Cys1056, Cys1059, and Cys1065 each contribute to the [4Fe-4S] cluster site.

Belongs to the helicase family. AddB/RexB type 2 subfamily. In terms of assembly, heterodimer of RexA (AddA) and RexB. It depends on Mg(2+) as a cofactor. [4Fe-4S] cluster serves as cofactor.

Its function is as follows. The heterodimer acts both as an ATP-dependent DNA helicase and an ATP-dependent, dual-direction single-stranded exonuclease. Recognizes the L.lactis chi site (5'-GCGCGTG-3'), which stimulates homologous recombination. This subunit has 5'-&gt;3' exonuclease activity. The heterodimer acts as both an ATP-dependent DNA helicase and an ATP-dependent, dual-direction single-stranded exonuclease. Recognizes the chi site generating a DNA molecule suitable for the initiation of homologous recombination. This subunit has 5' -&gt; 3' nuclease activity but not helicase activity. The chain is Exonuclease/helicase subunit RexB from Lactococcus lactis subsp. cremoris (strain MG1363).